A 241-amino-acid polypeptide reads, in one-letter code: Small ribosomal subunit protein bS6 (241 aa).

Positions 97-108 (KPKIRERNRKYT) are enriched in basic residues. Disordered regions lie at residues 97 to 187 (KPKI…HREN) and 199 to 241 (NKNH…QSSN). Positions 109 to 118 (PRRDRFDKPN) are enriched in basic and acidic residues. Composition is skewed to low complexity over residues 130 to 151 (QDQQ…QTSQ), 161 to 180 (DDFQ…QQNQ), and 199 to 210 (NKNHQNQTSQTQ).

This sequence belongs to the bacterial ribosomal protein bS6 family.

Functionally, binds together with bS18 to 16S ribosomal RNA. In Mesomycoplasma hyopneumoniae (strain 7448) (Mycoplasma hyopneumoniae), this protein is Small ribosomal subunit protein bS6.